The following is a 427-amino-acid chain: Glutamate-1-semialdehyde 2,1-aminomutase (427 aa).

Lys-265 carries the post-translational modification N6-(pyridoxal phosphate)lysine.

Belongs to the class-III pyridoxal-phosphate-dependent aminotransferase family. HemL subfamily. In terms of assembly, homodimer. It depends on pyridoxal 5'-phosphate as a cofactor.

The protein resides in the cytoplasm. The enzyme catalyses (S)-4-amino-5-oxopentanoate = 5-aminolevulinate. Its pathway is porphyrin-containing compound metabolism; protoporphyrin-IX biosynthesis; 5-aminolevulinate from L-glutamyl-tRNA(Glu): step 2/2. The chain is Glutamate-1-semialdehyde 2,1-aminomutase from Bordetella bronchiseptica (strain ATCC BAA-588 / NCTC 13252 / RB50) (Alcaligenes bronchisepticus).